The chain runs to 472 residues: Alanine--anticapsin ligase (472 aa).

Residue Glu109 participates in Mg(2+) binding. 2 residues coordinate ATP: Lys138 and Lys178. An ATP-grasp domain is found at Arg142–Cys355. A Mg(2+)-binding site is contributed by Leu182. ATP is bound by residues Ser184–Ser185, Glu226–Leu229, and Gln268. Substrate-binding positions include Glu273 and His309 to Glu311. Mg(2+)-binding residues include Glu311 and Glu324. Arg328 to Gly331 is a substrate binding site.

As to quaternary structure, monomer or homodimer. Mg(2+) serves as cofactor.

The enzyme catalyses L-anticapsin + L-alanine + ATP = bacilysin + ADP + phosphate + H(+). The protein operates within antibiotic biosynthesis; bacilysin biosynthesis. Part of the bacABCDEFG operon responsible for the biosynthesis of bacilysin, an irreversible inactivator of the glutaminase domain of glucosamine synthetase. Catalyzes the formation of alpha-dipeptides from various L-amino acids in the presence of ATP. In vivo catalyzes the ligation of L-alanine and L-anticapsin (epoxycyclohexanonyl-Ala) to produce the final bacilysin antibiotic (L-Ala-L-4S-cyclohexenonyl-Ala dipeptide). The substrate specificity is restricted to small amino acids such as L-Ala, for the N-terminal end of the dipeptide, whereas a wide range of hydrophobic amino acids such as L-Phe, L-Tyr and L-Met are recognized for the C-terminal end. The chain is Alanine--anticapsin ligase from Bacillus subtilis (strain 168).